We begin with the raw amino-acid sequence, 427 residues long: Serine--tRNA ligase (427 aa).

An L-serine-binding site is contributed by 230–232 (TSE). Residues 260 to 262 (RRE) and Val-276 contribute to the ATP site. Position 283 (Glu-283) interacts with L-serine. 347–350 (ELTS) provides a ligand contact to ATP. Thr-387 is a binding site for L-serine.

It belongs to the class-II aminoacyl-tRNA synthetase family. Type-1 seryl-tRNA synthetase subfamily. Homodimer. The tRNA molecule binds across the dimer.

It localises to the cytoplasm. It catalyses the reaction tRNA(Ser) + L-serine + ATP = L-seryl-tRNA(Ser) + AMP + diphosphate + H(+). It carries out the reaction tRNA(Sec) + L-serine + ATP = L-seryl-tRNA(Sec) + AMP + diphosphate + H(+). Its pathway is aminoacyl-tRNA biosynthesis; selenocysteinyl-tRNA(Sec) biosynthesis; L-seryl-tRNA(Sec) from L-serine and tRNA(Sec): step 1/1. In terms of biological role, catalyzes the attachment of serine to tRNA(Ser). Is also able to aminoacylate tRNA(Sec) with serine, to form the misacylated tRNA L-seryl-tRNA(Sec), which will be further converted into selenocysteinyl-tRNA(Sec). The chain is Serine--tRNA ligase from Micrococcus luteus (strain ATCC 4698 / DSM 20030 / JCM 1464 / CCM 169 / CCUG 5858 / IAM 1056 / NBRC 3333 / NCIMB 9278 / NCTC 2665 / VKM Ac-2230) (Micrococcus lysodeikticus).